A 314-amino-acid chain; its full sequence is Probable dimethyladenosine transferase (314 aa).

Positions 36, 38, 63, 84, 112, and 127 each coordinate S-adenosyl-L-methionine.

It belongs to the class I-like SAM-binding methyltransferase superfamily. rRNA adenine N(6)-methyltransferase family. Part of the small subunit (SSU) processome, composed of more than 70 proteins and the RNA chaperone small nucleolar RNA (snoRNA) U3.

The protein localises to the nucleus. It is found in the nucleoplasm. The protein resides in the nucleolus. The catalysed reaction is adenosine(1779)/adenosine(1780) in 18S rRNA + 4 S-adenosyl-L-methionine = N(6)-dimethyladenosine(1779)/N(6)-dimethyladenosine(1780) in 18S rRNA + 4 S-adenosyl-L-homocysteine + 4 H(+). Specifically dimethylates two adjacent adenosines in the loop of a conserved hairpin near the 3'-end of 18S rRNA in the 40S particle. Involved in the pre-rRNA processing steps leading to small-subunit rRNA production independently of its RNA-modifying catalytic activity. Part of the small subunit (SSU) processome, first precursor of the small eukaryotic ribosomal subunit. During the assembly of the SSU processome in the nucleolus, many ribosome biogenesis factors, an RNA chaperone and ribosomal proteins associate with the nascent pre-rRNA and work in concert to generate RNA folding, modifications, rearrangements and cleavage as well as targeted degradation of pre-ribosomal RNA by the RNA exosome. In Dictyostelium discoideum (Social amoeba), this protein is Probable dimethyladenosine transferase (dimt1).